Here is a 346-residue protein sequence, read N- to C-terminus: NADH-ubiquinone oxidoreductase chain 2 (346 aa).

10 consecutive transmembrane segments (helical) span residues 25–45 (HWIL…PLIS), 52–72 (AIEA…LILF), 95–115 (CLIL…HFWF), 124–144 (LITA…LLLM), 149–169 (LNPA…GWMG), 178–196 (ILAF…IIIY), 200–219 (LTIL…FLSL), 247–267 (TLLS…WLII), 274–294 (EMTP…FFYL), and 326–346 (AILT…TTLV).

The protein belongs to the complex I subunit 2 family.

It is found in the mitochondrion inner membrane. The enzyme catalyses a ubiquinone + NADH + 5 H(+)(in) = a ubiquinol + NAD(+) + 4 H(+)(out). In terms of biological role, core subunit of the mitochondrial membrane respiratory chain NADH dehydrogenase (Complex I) that is believed to belong to the minimal assembly required for catalysis. Complex I functions in the transfer of electrons from NADH to the respiratory chain. The immediate electron acceptor for the enzyme is believed to be ubiquinone. This chain is NADH-ubiquinone oxidoreductase chain 2 (MT-ND2), found in Coturnix japonica (Japanese quail).